A 162-amino-acid chain; its full sequence is Phenazine biosynthesis protein PhzB1 (162 aa).

Belongs to the PhzA/PhzB family. In terms of assembly, homodimer.

It functions in the pathway antibiotic biosynthesis; phenazine biosynthesis. Its function is as follows. Involved in the biosynthesis of the antibiotic phenazine, a nitrogen-containing heterocyclic molecule. PhzB1 (operon phzA1B1C1E1F1G1) has a role in the biosynthesis of the phenazine during planktonic growth. This Pseudomonas aeruginosa (strain ATCC 15692 / DSM 22644 / CIP 104116 / JCM 14847 / LMG 12228 / 1C / PRS 101 / PAO1) protein is Phenazine biosynthesis protein PhzB1.